Consider the following 111-residue polypeptide: X antigen family member 3 (111 aa).

The segment at 1–111 (MIWRGRSTYR…PEGGDRQPQV (111 aa)) is disordered. Over residues 29-40 (PGDEEPQQEEPP) the composition is skewed to acidic residues. Residues 97–111 (EQFKMPEGGDRQPQV) show a composition bias toward basic and acidic residues.

Belongs to the GAGE family.

The protein is X antigen family member 3 (XAGE3) of Homo sapiens (Human).